A 467-amino-acid chain; its full sequence is F-box only protein 6 (467 aa).

Positions 114–163 (QEIWQEFPQDLFEDVVSRLPMATFFQFRAVCRKWNALIDSDSFSRCFTEL) constitute an F-box domain. Kelch repeat units lie at residues 163–211 (LPQT…MASA), 252–305 (GMTL…NFKS), and 406–456 (CLGN…IACG).

The protein is F-box only protein 6 (FBX6) of Arabidopsis thaliana (Mouse-ear cress).